The chain runs to 138 residues: Transmembrane protein 170A (138 aa).

Topologically, residues 1–44 (MEGSEAGGGGLLQQILSLRLVPRVGNGTTYSSPLSTFPEMWYGV) are lumenal. N-linked (GlcNAc...) asparagine glycosylation is present at asparagine 26. A helical membrane pass occupies residues 45-65 (FLWALVSSLSFHVPAALLALF). The Cytoplasmic segment spans residues 66–79 (TLRHHKYGRFMSVS). The helical transmembrane segment at 80–100 (LLLMGIVGPITAGILTSAAIA) threads the bilayer. Residues 101-110 (GVYRAAGKKM) are Lumenal-facing. A helical membrane pass occupies residues 111–131 (IPFEALIFEVGQTFCVVVVSF). Residues 132–138 (LRILATL) lie on the Cytoplasmic side of the membrane.

This sequence belongs to the TMEM170 family.

The protein resides in the endoplasmic reticulum membrane. The protein localises to the nucleus envelope. Functionally, may regulate membrane morphogenesis in the endoplasmic reticulum (ER) by promoting ER sheet formation at the expense of ER tubules. The chain is Transmembrane protein 170A (TMEM170A) from Gallus gallus (Chicken).